The sequence spans 312 residues: 4-diphosphocytidyl-2-C-methyl-D-erythritol kinase (312 aa).

Residue Lys16 is part of the active site. 101-111 (PIGAGLAGGSS) serves as a coordination point for ATP. The active site involves Asp143.

The protein belongs to the GHMP kinase family. IspE subfamily.

It catalyses the reaction 4-CDP-2-C-methyl-D-erythritol + ATP = 4-CDP-2-C-methyl-D-erythritol 2-phosphate + ADP + H(+). The protein operates within isoprenoid biosynthesis; isopentenyl diphosphate biosynthesis via DXP pathway; isopentenyl diphosphate from 1-deoxy-D-xylulose 5-phosphate: step 3/6. Functionally, catalyzes the phosphorylation of the position 2 hydroxy group of 4-diphosphocytidyl-2C-methyl-D-erythritol. The protein is 4-diphosphocytidyl-2-C-methyl-D-erythritol kinase of Prochlorococcus marinus (strain MIT 9515).